The chain runs to 365 residues: Solute carrier family 35 member G1 (365 aa).

The segment at 1-33 is disordered; it reads MRPQDSTGVAELQEPGLPLTDDAPPGATEEPAA. The span at 23–33 shows a compositional bias: low complexity; that stretch reads APPGATEEPAA. A run of 10 helical transmembrane segments spans residues 69-89, 97-117, 131-151, 156-176, 187-207, 222-242, 252-272, 286-306, 311-333, and 338-357; these read GLGL…SLFV, AVEI…PCLI, IFLI…YYAY, LADA…FAWI, ALFT…PFLF, LKGT…LVIL, FLSI…ILSV, LFLI…TKAL, AGPV…IIFF, and TWWT…GAAI. 2 EamA domains span residues 80–202 and 233–357; these read FLFS…LIVR and VFAA…GAAI.

It belongs to the TMEM20 family. In terms of assembly, interacts with STIM1; stimulated by depletion of intracellular calcium. Interacts with ORAI1. Interacts with the plasma membrane calcium-transporting ATPases ATP2B1 and ATP2B4. Interacts with ATP1A1, ATP2A2, KPNB1 and XPO1. Ubiquitously expressed.

The protein resides in the cell membrane. The protein localises to the endoplasmic reticulum membrane. Its function is as follows. May play a role in intracellular calcium sensing and homeostasis. May act as a negative regulator of plasma membrane calcium-transporting ATPases preventing calcium efflux from the cell. The sequence is that of Solute carrier family 35 member G1 (SLC35G1) from Homo sapiens (Human).